Consider the following 452-residue polypeptide: Cell division protein FtsZ (452 aa).

Residues 24–28 (GAGSN), 111–113 (GTG), glutamate 142, arginine 146, and aspartate 190 contribute to the GTP site. A disordered region spans residues 432–452 (DQDNKESDIHDIPAFLRKKRD). The span at 433–442 (QDNKESDIHD) shows a compositional bias: basic and acidic residues.

The protein belongs to the FtsZ family. Homodimer. Polymerizes to form a dynamic ring structure in a strictly GTP-dependent manner. Interacts directly with several other division proteins.

It localises to the cytoplasm. Essential cell division protein that forms a contractile ring structure (Z ring) at the future cell division site. The regulation of the ring assembly controls the timing and the location of cell division. One of the functions of the FtsZ ring is to recruit other cell division proteins to the septum to produce a new cell wall between the dividing cells. Binds GTP and shows GTPase activity. The sequence is that of Cell division protein FtsZ from Rickettsia conorii (strain ATCC VR-613 / Malish 7).